The chain runs to 227 residues: Cytochrome c oxidase subunit 2 (227 aa).

Topologically, residues 1-14 (MAYPFQLGLQDATS) are mitochondrial intermembrane. The chain crosses the membrane as a helical span at residues 15-45 (PIMEELTSFHDHTLMIVFLISSLVLYIILLM). The Mitochondrial matrix portion of the chain corresponds to 46 to 59 (LTTKLTHTSTMDAQ). The chain crosses the membrane as a helical span at residues 60-87 (EVETIWTILPAVILILIALPSLRILYMM). At 88–227 (DEINNPALTV…HFENWSASMI (140 aa)) the chain is on the mitochondrial intermembrane side. Residues His-161, Cys-196, Glu-198, Cys-200, His-204, and Met-207 each coordinate Cu cation. Position 198 (Glu-198) interacts with Mg(2+).

The protein belongs to the cytochrome c oxidase subunit 2 family. As to quaternary structure, component of the cytochrome c oxidase (complex IV, CIV), a multisubunit enzyme composed of 14 subunits. The complex is composed of a catalytic core of 3 subunits MT-CO1, MT-CO2 and MT-CO3, encoded in the mitochondrial DNA, and 11 supernumerary subunits COX4I, COX5A, COX5B, COX6A, COX6B, COX6C, COX7A, COX7B, COX7C, COX8 and NDUFA4, which are encoded in the nuclear genome. The complex exists as a monomer or a dimer and forms supercomplexes (SCs) in the inner mitochondrial membrane with NADH-ubiquinone oxidoreductase (complex I, CI) and ubiquinol-cytochrome c oxidoreductase (cytochrome b-c1 complex, complex III, CIII), resulting in different assemblies (supercomplex SCI(1)III(2)IV(1) and megacomplex MCI(2)III(2)IV(2)). Found in a complex with TMEM177, COA6, COX18, COX20, SCO1 and SCO2. Interacts with TMEM177 in a COX20-dependent manner. Interacts with COX20. Interacts with COX16. Requires Cu cation as cofactor.

The protein localises to the mitochondrion inner membrane. It catalyses the reaction 4 Fe(II)-[cytochrome c] + O2 + 8 H(+)(in) = 4 Fe(III)-[cytochrome c] + 2 H2O + 4 H(+)(out). Component of the cytochrome c oxidase, the last enzyme in the mitochondrial electron transport chain which drives oxidative phosphorylation. The respiratory chain contains 3 multisubunit complexes succinate dehydrogenase (complex II, CII), ubiquinol-cytochrome c oxidoreductase (cytochrome b-c1 complex, complex III, CIII) and cytochrome c oxidase (complex IV, CIV), that cooperate to transfer electrons derived from NADH and succinate to molecular oxygen, creating an electrochemical gradient over the inner membrane that drives transmembrane transport and the ATP synthase. Cytochrome c oxidase is the component of the respiratory chain that catalyzes the reduction of oxygen to water. Electrons originating from reduced cytochrome c in the intermembrane space (IMS) are transferred via the dinuclear copper A center (CU(A)) of subunit 2 and heme A of subunit 1 to the active site in subunit 1, a binuclear center (BNC) formed by heme A3 and copper B (CU(B)). The BNC reduces molecular oxygen to 2 water molecules using 4 electrons from cytochrome c in the IMS and 4 protons from the mitochondrial matrix. The sequence is that of Cytochrome c oxidase subunit 2 (MT-CO2) from Anisomys imitator (Uneven-toothed rat).